The primary structure comprises 429 residues: MKNTYNLRSIAAKAISQVLDQGQSLSTVLPGLQKSISDKDRALLQELCFGTLRVLPQLEWCIQQLMARPMTGKQRVFHYLIMVGLYQLIYTRIPPHAALAETVEGATALKRPQLKGLINGVLRQFQRQQVELLERAANNDSHYLHPSWLLARIKLAYPDQWQQILDANNQKPPMWLRVNRLHHSRIEYLELLKQANIEALPHDFYPDAVRLITPCAVSDLPGFELGWVTVQDASAQGCVDLLDPQDGEQILDLCAAPGGKTTHILEAAPKVHVLAVDIDEQRLSRVKENLQRLRLHADVRVGDGRTPDEWCGDQQFDRILLDAPCSATGVIRRHPDIKWLRRDSDIAELAQLQSEIIEAIWPKLKKGGVMVYATCSILPEENQQQIATFLQRHSEADLVETGTVSALGRQNLPHPEDGDGFYYAKLIKR.

S-adenosyl-L-methionine contacts are provided by residues 254–260, Asp-277, Asp-303, and Asp-322; that span reads CAAPGGK. The Nucleophile role is filled by Cys-375.

The protein belongs to the class I-like SAM-binding methyltransferase superfamily. RsmB/NOP family.

The protein localises to the cytoplasm. The enzyme catalyses cytidine(967) in 16S rRNA + S-adenosyl-L-methionine = 5-methylcytidine(967) in 16S rRNA + S-adenosyl-L-homocysteine + H(+). In terms of biological role, specifically methylates the cytosine at position 967 (m5C967) of 16S rRNA. The sequence is that of Ribosomal RNA small subunit methyltransferase B from Yersinia enterocolitica serotype O:8 / biotype 1B (strain NCTC 13174 / 8081).